Consider the following 158-residue polypeptide: Secreted RxLR effector protein 2 (158 aa).

The signal sequence occupies residues 1-21; it reads MRLLLWVLLVTLVTFLSSGDA. The RxLR-dEER signature appears at 54–75; the sequence is RFLRGDRSNIVNLKDGDENEER.

Belongs to the RxLR effector family.

It is found in the secreted. Its subcellular location is the host cell. Functionally, secreted effector that completely suppresses elicitor-induced cell death in host and enhances virulence of P.parasitica. The chain is Secreted RxLR effector protein 2 from Phytophthora nicotianae (Potato buckeye rot agent).